Here is a 183-residue protein sequence, read N- to C-terminus: Translocon-associated protein subunit beta (183 aa).

The N-terminal stretch at Met1–Ala17 is a signal peptide. The Lumenal portion of the chain corresponds to Glu18–Asp149. 2 N-linked (GlcNAc...) asparagine glycosylation sites follow: Asn88 and Asn104. A helical transmembrane segment spans residues Trp150 to Tyr169. Residues Ser170–Asn183 are Cytoplasmic-facing.

Belongs to the TRAP-beta family. Heterotetramer of TRAP-alpha, TRAP-beta, TRAP-delta and TRAP-gamma. Interacts with STING1.

The protein resides in the endoplasmic reticulum membrane. In terms of biological role, TRAP proteins are part of a complex whose function is to bind calcium to the ER membrane and thereby regulate the retention of ER resident proteins. This Canis lupus familiaris (Dog) protein is Translocon-associated protein subunit beta (SSR2).